We begin with the raw amino-acid sequence, 1839 residues long: Adenylate cyclase (1839 aa).

Disordered regions lie at residues 1–21 (MSSP…PQIE), 43–87 (ITTH…PRFS), 126–245 (TSLL…PIVS), 272–315 (KNTE…QWTA), 332–388 (KRKA…DSND), and 400–468 (ESSG…SFSK). A compositionally biased stretch (polar residues) spans 165 to 211 (SQSNESRGTRSSIFFPSTSNSRRGSATSTMTSGSRSSHPPDTPPITS). Over residues 212-221 (QQQEQQYDQQ) the composition is skewed to low complexity. A compositionally biased stretch (basic and acidic residues) spans 222-233 (RQQRPETREQEQ). Positions 332–355 (KRKAKHHHHYHHPQHPRPPHRKHY) are enriched in basic residues. Residues 361–376 (PIEDKAVVEKEQEPPE) are compositionally biased toward basic and acidic residues. Over residues 407–428 (SASTQSVSSFSSGATGASGATG) the composition is skewed to low complexity. The Ras-associating domain occupies 494–574 (RRYAIRIFNI…LNGYLKSDPL (81 aa)). 22 LRR repeats span residues 632-655 (TSDI…FIES), 659-679 (LSSL…VTDA), 681-702 (KLVS…IFKL), 704-726 (NLTI…SKLK), 727-748 (NLQL…INSC), 750-771 (NLLQ…INQL), 773-794 (KLAK…SQMK), 795-816 (NLRT…APNL), 817-834 (QNLF…DDLT), 835-856 (RLRT…GNYM), 858-879 (NMTS…LLSK), 882-903 (RLEK…INKL), 905-926 (RLIY…ISDL), 928-950 (SLKS…EDLE), 951-971 (LTSL…PAKF), 982-1004 (SLLF…VNTF), 1006-1027 (NLKT…KLQN), 1028-1048 (LTEL…AVQH), 1051-1073 (SLKV…SQLS), 1074-1096 (RLSV…HYDW), 1103-1124 (DLKY…LDPE), and 1135-1160 (LKQL…SVSI). The 267-residue stretch at 1173–1439 (RYGVADTLGQ…DNITILCVSL (267 aa)) folds into the PPM-type phosphatase domain. The Guanylate cyclase domain occupies 1483–1620 (AIVFTDIKNS…PVVNKAARVS (138 aa)). Positions 1488 and 1531 each coordinate Mg(2+).

Belongs to the adenylyl cyclase class-3 family. Mg(2+) serves as cofactor.

The enzyme catalyses ATP = 3',5'-cyclic AMP + diphosphate. In terms of biological role, plays essential roles in regulation of cellular metabolism by catalyzing the synthesis of a second messenger, cAMP. This Lachancea kluyveri (Yeast) protein is Adenylate cyclase (CYR1).